The following is a 59-amino-acid chain: MKILSVLLLALIICSIVGWSEAQFTDVSCTTSKECWSVCQRLHNTSIGKCMNKKCRCYS.

The N-terminal stretch at 1–22 (MKILSVLLLALIICSIVGWSEA) is a signal peptide. Position 23 is a pyrrolidone carboxylic acid (Gln-23). Cystine bridges form between Cys-29-Cys-50, Cys-35-Cys-55, and Cys-39-Cys-57. Residues 48-55 (GKCMNKKC) form an interaction with Ca(2+)-activated K(+) channels region.

The protein belongs to the short scorpion toxin superfamily. Potassium channel inhibitor family. Alpha-KTx 01 subfamily. As to expression, expressed by the venom gland.

The protein localises to the secreted. Potent selective inhibitor of high conductance (maxi-K), different medium and small conductance calcium-activated potassium channels (KCa1.1/KCNMA1 and others), as well as a voltage-dependent potassium channel (Kv1.3/KCNA3&gt;Kv1.2/KCNA2&gt;Kv1.6/KCNA3&gt;&gt;Shaker/Sh). It blocks channel activity by a simple bimolecular inhibition process. In terms of biological role, has a pH-specific antimicrobial activity against bacteria (B.subtilis, E.coli and S.aureus) and the fungus C.albicans. This Leiurus hebraeus (Hebrew deathstalker scorpion) protein is Potassium channel toxin alpha-KTx 1.12.